Here is a 360-residue protein sequence, read N- to C-terminus: UPF0283 membrane protein Asuc_0957 (360 aa).

3 consecutive transmembrane segments (helical) span residues 74 to 94 (VIAV…QWLI), 102 to 122 (WIYF…LSAL), and 215 to 235 (AVEN…MLFL).

It belongs to the UPF0283 family.

The protein localises to the cell inner membrane. The polypeptide is UPF0283 membrane protein Asuc_0957 (Actinobacillus succinogenes (strain ATCC 55618 / DSM 22257 / CCUG 43843 / 130Z)).